Consider the following 369-residue polypeptide: DNA replication and repair protein RecF (369 aa).

30–37 (GDNAQGKT) contributes to the ATP binding site.

Belongs to the RecF family.

Its subcellular location is the cytoplasm. Its function is as follows. The RecF protein is involved in DNA metabolism; it is required for DNA replication and normal SOS inducibility. RecF binds preferentially to single-stranded, linear DNA. It also seems to bind ATP. The polypeptide is DNA replication and repair protein RecF (Streptococcus equi subsp. zooepidemicus (strain H70)).